The sequence spans 320 residues: Tabersonine synthase (320 aa).

Positions 78-80 (HGA) match the Involved in the stabilization of the negatively charged intermediate by the formation of the oxyanion hole motif. A (-)-tabersonine-binding site is contributed by Gly-81. Ser-170 acts as the Proton acceptor in catalysis. The active site involves Asp-266. (-)-tabersonine is bound at residue Tyr-297. Tyr-297 acts as the Proton donor/acceptor in catalysis.

The protein belongs to the 'GDXG' lipolytic enzyme family. As to quaternary structure, interacts with dehydroprecondylocarpine acetate synthase (DPAS). In terms of tissue distribution, expressed in leaf epidermis.

The protein resides in the cytoplasm. Its subcellular location is the cytosol. The protein localises to the nucleus. It carries out the reaction dehydrosecodine = (-)-tabersonine. The enzyme catalyses dihydroprecondylocarpine acetate = (-)-tabersonine + acetate + H(+). It participates in alkaloid biosynthesis. In terms of biological role, component of iboga and aspidosperma monoterpenoid indole alkaloids (MIAs, e.g. tabersonine and catharanthine) biosynthesis pathway from 19E-geissoschizine, psychoactive compounds likely to be used in the treatment of opioid dependence. Catalyzes the conversion of dehydrosecodine to tabersonine, a precursor of vindoline; this process starts with the conversion of dihydroprecondylocarpine acetate to dehydrosecodine. The protein is Tabersonine synthase of Catharanthus roseus (Madagascar periwinkle).